The primary structure comprises 411 residues: Acetylornithine aminotransferase (411 aa).

Pyridoxal 5'-phosphate-binding positions include Gly107 to Thr108 and Phe141. Arg144 is a N(2)-acetyl-L-ornithine binding site. A pyridoxal 5'-phosphate-binding site is contributed by Asp227–Gln230. Lys256 is modified (N6-(pyridoxal phosphate)lysine). Position 284 (Thr284) interacts with N(2)-acetyl-L-ornithine. Thr285 is a binding site for pyridoxal 5'-phosphate.

The protein belongs to the class-III pyridoxal-phosphate-dependent aminotransferase family. ArgD subfamily. As to quaternary structure, homodimer. The cofactor is pyridoxal 5'-phosphate.

It localises to the cytoplasm. It carries out the reaction N(2)-acetyl-L-ornithine + 2-oxoglutarate = N-acetyl-L-glutamate 5-semialdehyde + L-glutamate. It functions in the pathway amino-acid biosynthesis; L-arginine biosynthesis; N(2)-acetyl-L-ornithine from L-glutamate: step 4/4. The chain is Acetylornithine aminotransferase from Xylella fastidiosa (strain Temecula1 / ATCC 700964).